The sequence spans 536 residues: MKLTLWTYEGPPHVGAMRVATGMTGMHYVLHAPQGDTYADLLFTMIERRGKRPPVSYTTFQARDLGSDTAELFQSACRDAYERFQPQAIMVGSSCTAELIQDDTGGLADALSLPVPVVHLELPSYQRKENFGADESFLQICRKLARPMERTEKVSCNLLGPTALGFRHRDDILEVTRLLEGMGIAVNAVAPMGASPADIARLGAAHFNVLLYPETGESAARWAEKTLKQPYTKTVPIGVGATRDFVAEVAALAGVAPVADDSRLRQPWWSASVDSTYLTGKRVFLFGDATHVIAAARVARDEMGFEVVGMGCYNREFARPMRAAAKGYGLEALVTDDYLEVEEAIQALAPELILGTQMERHIAKRLGIPCAVISAPVHVQDFPARYSPQMGFEGANVLFDTWIHPLTMGLEEHLLTMFREDFEFHDEAGPSHHGGKAVPASAPRADEAAEALPATGAETAEGGSIPPEAVPPAAAAAAEAPAGEIVWLTDAERELKKIPFFVRGKARRNTEKFAAEKGLTRISIETLYEAKAHYAR.

Asp-36 contacts [4Fe-4S] cluster. The active-site Proton donor is the Asp-274. 409–410 (GL) lines the substrate pocket. The tract at residues 426 to 448 (DEAGPSHHGGKAVPASAPRADEA) is disordered.

Belongs to the ChlB/BchB/BchZ family. In terms of assembly, protochlorophyllide reductase is composed of three subunits; BchL, BchN and BchB. Forms a heterotetramer of two BchB and two BchN subunits. It depends on [4Fe-4S] cluster as a cofactor.

The enzyme catalyses chlorophyllide a + oxidized 2[4Fe-4S]-[ferredoxin] + 2 ADP + 2 phosphate = protochlorophyllide a + reduced 2[4Fe-4S]-[ferredoxin] + 2 ATP + 2 H2O. Its pathway is porphyrin-containing compound metabolism; bacteriochlorophyll biosynthesis (light-independent). Functionally, component of the dark-operative protochlorophyllide reductase (DPOR) that uses Mg-ATP and reduced ferredoxin to reduce ring D of protochlorophyllide (Pchlide) to form chlorophyllide a (Chlide). This reaction is light-independent. The NB-protein (BchN-BchB) is the catalytic component of the complex. The chain is Light-independent protochlorophyllide reductase subunit B from Cereibacter sphaeroides (strain KD131 / KCTC 12085) (Rhodobacter sphaeroides).